A 305-amino-acid polypeptide reads, in one-letter code: Aquaporin NIP6-1 (305 aa).

Residues 1-30 (MDHEEIPSTPSTPATTPGTPGAPLFGGFEG) are disordered. Residues 7 to 23 (PSTPSTPATTPGTPGAP) show a composition bias toward low complexity. The next 2 helical transmembrane spans lie at 82–102 (LGAE…TAIV) and 111–131 (TLIG…LSTG). An NPA 1 motif is present at residues 139–141 (NPA). 3 helical membrane passes run 159 to 179 (VYIG…KAVF), 194 to 214 (LSQA…VVTA), and 221 to 241 (AVGE…ILIA). The short motif at 250-252 (NPV) is the NPA 2 element. A helical transmembrane segment spans residues 267-287 (IWVYLTAPILGALIGAGTYTI). A Phosphoserine modification is found at Ser302.

The protein belongs to the MIP/aquaporin (TC 1.A.8) family. NIP (TC 1.A.8.12) subfamily. As to expression, expressed in roots.

The protein localises to the membrane. Its function is as follows. Transports glycerol, urea and formamide, in Xenopus laevis oocytes. Very low water transport activity. This is Aquaporin NIP6-1 (NIP6-1) from Arabidopsis thaliana (Mouse-ear cress).